Here is a 70-residue protein sequence, read N- to C-terminus: Protein SlyX homolog (70 aa).

Belongs to the SlyX family.

This Agrobacterium fabrum (strain C58 / ATCC 33970) (Agrobacterium tumefaciens (strain C58)) protein is Protein SlyX homolog.